Here is a 651-residue protein sequence, read N- to C-terminus: MARGSAVAWAAFGPLLWGCALGLQGGMLYPQESRSRERKELDGLWSFRADFSDNRRRGFEEQWYRRPLRESGPTLDMPVPSSFNDISQDWRLRHFVGWVWYEREVILPERWTQDLHTRVVLRIGSAHSYAIVWVNGVDTLEHEGGYLPFEADISNLVQVGPLPSRLRITIAINNTLTPTTLPPGTIQYMNDTSKYPKGYFVQNTYFDFFNYAGLQRSVLLYTTPTTYIDDITVTTGVEQDSGLVNYQISVKGSNLFELEARLLDAENKVVANGTGTQGQLKVPGASLWWPYLMHERPAYLYSLEVRLTAQTSLGPVSDFYSLPVGIRTVAVTESQFLINGKPFYFHGVNKHEDADIRGKGFDWPLLVKDFNLLRWLGANAFRTSHYPYAEEVLQMCDRHGIVVIDECPGVGLALPQFFNNVSLHHHMRVMEEVVRRDKNHPAVVMWSVANEPASHLESAGYYLKMVIAHTKALDPSRPVTFVSNSNYAADKGAPYVDVICLNSYYSWYHDYGHLELIQLQLATQFENWYKKYQKPIIQSEYGAETIAGFHQDPPLMFTEEYQKSLLEQYHLGLDQKRRKYVVGELIWNFADFMTEQSLTRVLGNKKGIFTRQRQPKSAAFLLRERYWKIANETRYPHSVAKSQCLENSPFT.

The first 22 residues, M1 to G22, serve as a signal peptide directing secretion. N-linked (GlcNAc...) asparagine glycosylation is found at N173, N190, N272, and N420. The active-site Proton donor is E451. N631 carries N-linked (GlcNAc...) asparagine glycosylation.

This sequence belongs to the glycosyl hydrolase 2 family. In terms of assembly, homotetramer.

The protein localises to the lysosome. The catalysed reaction is a beta-D-glucuronoside + H2O = D-glucuronate + an alcohol. With respect to regulation, inhibited by L-aspartic acid. Its function is as follows. Plays an important role in the degradation of dermatan and keratan sulfates. This chain is Beta-glucuronidase (GUSB), found in Pongo abelii (Sumatran orangutan).